Consider the following 197-residue polypeptide: MNLVPTVIEQSSQGERAYDIYSRLLKDRIIMVSGEVNDDMANAIIAQLLFLDAQDSEKDIYMYINSPGGSVSAGLAIYDTMNFVNADVQTIVMGMAASMASVLATAGTKGKRFALPNSEIMIHQPLGGAQGQSTEIQIAAEHILKTRKLINQILADGSGQDIETINKDTERDNFMTAQQAVDYGLIDGIMKNKKKIK.

S98 serves as the catalytic Nucleophile. H123 is a catalytic residue.

Belongs to the peptidase S14 family. In terms of assembly, fourteen ClpP subunits assemble into 2 heptameric rings which stack back to back to give a disk-like structure with a central cavity, resembling the structure of eukaryotic proteasomes.

It localises to the cytoplasm. It carries out the reaction Hydrolysis of proteins to small peptides in the presence of ATP and magnesium. alpha-casein is the usual test substrate. In the absence of ATP, only oligopeptides shorter than five residues are hydrolyzed (such as succinyl-Leu-Tyr-|-NHMec, and Leu-Tyr-Leu-|-Tyr-Trp, in which cleavage of the -Tyr-|-Leu- and -Tyr-|-Trp bonds also occurs).. Functionally, cleaves peptides in various proteins in a process that requires ATP hydrolysis. Has a chymotrypsin-like activity. Plays a major role in the degradation of misfolded proteins. This is ATP-dependent Clp protease proteolytic subunit from Ligilactobacillus salivarius (strain UCC118) (Lactobacillus salivarius).